A 397-amino-acid polypeptide reads, in one-letter code: G2/mitotic-specific cyclin-B1 (397 aa).

The segment covering 1–17 (MALRVTRNTRLASSENQ) has biased composition (polar residues). The disordered stretch occupies residues 1 to 30 (MALRVTRNTRLASSENQGALPGKAAVANKP).

Belongs to the cyclin family. Cyclin AB subfamily. Interacts with the CDK1 protein kinase to form a serine/threonine kinase holoenzyme complex also known as maturation promoting factor (MPF). The cyclin subunit imparts substrate specificity to the complex.

Its function is as follows. Essential for the control of the cell cycle at the G2/M (mitosis) transition. In Carassius auratus (Goldfish), this protein is G2/mitotic-specific cyclin-B1 (ccnb1).